Consider the following 453-residue polypeptide: MREVISIHVGQAGIQVGNACWELFCLEHGIQPDGQMPSDKASRANDDAFNTFFSETGAGKHVPRCVFVDLEPTVVDEVRTGTYRQLFHPEQLISGKEDAANNFARGHYTIGKEVIDVCLDRIRKLADNCTGLQGFLMFSAVGGGTGSGFGCLMLERLSVDYGKKSKLNFCCWPSPQVSTAVVEPYNSVLSTHSLLEHTDVAIMLDNEAIYDICRRNLDIERPTYTNLNRLIAQVISSLTASLRFDGALNVDVTEFQTNLVPYPRIHFMLSSYAPVVSAEKAYHEQLSVSEITNSAFEPANMMAKCDPRHGKYMACCLMYRGDVVPKDVNAAVATIKTKRTIQFVDWCPTGFKCGINYQPPTVVPGGDLAKVMRAVCMISNSTAIAEVFSRMDQKFDLMYAKRAFVHWYVGEGMEEGEFSEAREDLAALEKDYEEVGIESNEAEGEDEGYEADY.

Position 11 (Gln11) interacts with GTP. Lys40 is modified (N6-acetyllysine). GTP contacts are provided by Glu71, Gly144, Thr145, Thr179, Asn206, and Asn228. Glu71 contributes to the Mg(2+) binding site. Glu254 is a catalytic residue.

Belongs to the tubulin family. In terms of assembly, dimer of alpha and beta chains. A typical microtubule is a hollow water-filled tube with an outer diameter of 25 nm and an inner diameter of 15 nM. Alpha-beta heterodimers associate head-to-tail to form protofilaments running lengthwise along the microtubule wall with the beta-tubulin subunit facing the microtubule plus end conferring a structural polarity. Microtubules usually have 13 protofilaments but different protofilament numbers can be found in some organisms and specialized cells. It depends on Mg(2+) as a cofactor. Post-translationally, undergoes a tyrosination/detyrosination cycle, the cyclic removal and re-addition of a C-terminal tyrosine residue by the enzymes tubulin tyrosine carboxypeptidase (TTCP) and tubulin tyrosine ligase (TTL), respectively. In terms of processing, acetylation of alpha chains at Lys-40 stabilizes microtubules and affects affinity and processivity of microtubule motors. This modification has a role in multiple cellular functions, ranging from cell motility, cell cycle progression or cell differentiation to intracellular trafficking and signaling.

The protein resides in the cytoplasm. Its subcellular location is the cytoskeleton. The enzyme catalyses GTP + H2O = GDP + phosphate + H(+). Tubulin is the major constituent of microtubules, a cylinder consisting of laterally associated linear protofilaments composed of alpha- and beta-tubulin heterodimers. Microtubules grow by the addition of GTP-tubulin dimers to the microtubule end, where a stabilizing cap forms. Below the cap, tubulin dimers are in GDP-bound state, owing to GTPase activity of alpha-tubulin. The sequence is that of Tubulin alpha chain from Plasmodium falciparum (isolate K1 / Thailand).